The primary structure comprises 391 residues: Phosphoglycerate kinase (391 aa).

Residues 21-23 (DLN), Arg36, 59-62 (HLGR), Arg113, and Arg146 contribute to the substrate site. ATP contacts are provided by residues Lys197, Glu319, and 345–348 (GGDT).

It belongs to the phosphoglycerate kinase family. As to quaternary structure, monomer.

The protein resides in the cytoplasm. The catalysed reaction is (2R)-3-phosphoglycerate + ATP = (2R)-3-phospho-glyceroyl phosphate + ADP. It participates in carbohydrate degradation; glycolysis; pyruvate from D-glyceraldehyde 3-phosphate: step 2/5. This Shewanella baltica (strain OS155 / ATCC BAA-1091) protein is Phosphoglycerate kinase.